Here is a 461-residue protein sequence, read N- to C-terminus: Elongation factor 1-alpha (461 aa).

At G2 the chain carries N,N,N-trimethylglycine. A tr-type G domain is found at 5–242; it reads KIHINIVVIG…DAILPPSRPT (238 aa). Positions 14–21 are G1; that stretch reads GHVDSGKS. Residue 14 to 21 coordinates GTP; sequence GHVDSGKS. A G2 region spans residues 70-74; sequence GITID. The tract at residues 91–94 is G3; it reads DAPG. Residues 153 to 156 and 194 to 196 contribute to the GTP site; these read NKMD and SGW. Residues 153–156 are G4; it reads NKMD. The segment at 194–196 is G5; that stretch reads SGW. 5-glutamyl glycerylphosphorylethanolamine is present on residues E301 and E374.

This sequence belongs to the TRAFAC class translation factor GTPase superfamily. Classic translation factor GTPase family. EF-Tu/EF-1A subfamily.

Its subcellular location is the cytoplasm. It catalyses the reaction GTP + H2O = GDP + phosphate + H(+). Translation elongation factor that catalyzes the GTP-dependent binding of aminoacyl-tRNA (aa-tRNA) to the A-site of ribosomes during the elongation phase of protein synthesis. Base pairing between the mRNA codon and the aa-tRNA anticodon promotes GTP hydrolysis, releasing the aa-tRNA from EEF1A1 and allowing its accommodation into the ribosome. The growing protein chain is subsequently transferred from the P-site peptidyl tRNA to the A-site aa-tRNA, extending it by one amino acid through ribosome-catalyzed peptide bond formation. This is Elongation factor 1-alpha (eef1a) from Oryzias latipes (Japanese rice fish).